We begin with the raw amino-acid sequence, 549 residues long: Chaperonin GroEL (549 aa).

Residues 30–33, Lys51, 87–91, Gly415, and Asp495 contribute to the ATP site; these read TLGP and DGTTT.

This sequence belongs to the chaperonin (HSP60) family. In terms of assembly, forms a cylinder of 14 subunits composed of two heptameric rings stacked back-to-back. Interacts with the co-chaperonin GroES.

The protein localises to the cytoplasm. It carries out the reaction ATP + H2O + a folded polypeptide = ADP + phosphate + an unfolded polypeptide.. In terms of biological role, together with its co-chaperonin GroES, plays an essential role in assisting protein folding. The GroEL-GroES system forms a nano-cage that allows encapsulation of the non-native substrate proteins and provides a physical environment optimized to promote and accelerate protein folding. This Hahella chejuensis (strain KCTC 2396) protein is Chaperonin GroEL.